Reading from the N-terminus, the 274-residue chain is Factor H binding protein (274 aa).

A signal peptide spans 1 to 19 (MNRTAFCCLSLTTALILTA). Cysteine 20 is lipidated: N-palmitoyl cysteine. Cysteine 20 is lipidated: S-diacylglycerol cysteine. Positions 27 to 119 (VAADIGAGLA…LESGEFQVYK (93 aa)) are domain A. The interval 120–183 (QSHSALTAFQ…TAFGSDDAGG (64 aa)) is domain B. The interval 184–274 (KLTYTIDFAA…IRHIGLAAKQ (91 aa)) is domain C.

Belongs to the factor H binding-protein family. As to quaternary structure, binds to host factor H (fH from human). Both fHbp beta-barrels contact Sushi domains 6 and 7 in fH (also called complement control protein domains, CCP). This interaction probably mimics the normal (carbohydrate-dependent) mode of fH recruitement, regulating fH activity. Sucrose octasulphate inhibits the fHbp-fH interaction. Post-translationally, protein is lipidated in N.meningitidis upon growth in radioactive palmitic acid, probably on Cys-20.

It is found in the cell outer membrane. The protein resides in the secreted. It localises to the extracellular vesicle. Its subcellular location is the bacterial extracellular vesicle. Its function is as follows. A bacterial surface lipoprotein that binds host (human) complement factor H (fH, gene CFH), binding contributes to the avoidance of complement-mediated lysis by N.meningitidis. Binding of fH to the bacteria surface is independent of bacterial sialic acid moieties. fH binding affinity is high enough that it may sequester plasma fH, depleting its circulating levels and de-regulating complement in the host. This protein induces high levels of bactericidal antibodies in mice. This Neisseria meningitidis serogroup B (strain ATCC BAA-335 / MC58) protein is Factor H binding protein (fhbP).